The primary structure comprises 262 residues: MLTLYSETFPSRLLLGTAAYPTPEILKQSVRTARPAMITVSLRRAGCGGEAHGQGFWSLLQETGVPVLPNTAGCQSVQEAVTTAQMAREVFETDWIKLELIGDDDTLQPDVFQLVEAAEILIKDGFKVLPYCTEDLIACRRLLDAGCQALMPWAAPIGTGLGAVHAYALNVLRERLPDTPLIIDAGLGLPSQAAQVMEWGFDGVLLNTAVSRSGDPVNMARAFALAVESGRLAFEAGPVEARDKAQASTPTVGQPFWHSAEY.

Lys97 acts as the Schiff-base intermediate with DXP in catalysis. 1-deoxy-D-xylulose 5-phosphate is bound by residues Gly158, 185 to 186 (AG), and 207 to 208 (NT). A disordered region spans residues 243-262 (DKAQASTPTVGQPFWHSAEY).

It belongs to the ThiG family. In terms of assembly, homotetramer. Forms heterodimers with either ThiH or ThiS.

Its subcellular location is the cytoplasm. It carries out the reaction [ThiS sulfur-carrier protein]-C-terminal-Gly-aminoethanethioate + 2-iminoacetate + 1-deoxy-D-xylulose 5-phosphate = [ThiS sulfur-carrier protein]-C-terminal Gly-Gly + 2-[(2R,5Z)-2-carboxy-4-methylthiazol-5(2H)-ylidene]ethyl phosphate + 2 H2O + H(+). The protein operates within cofactor biosynthesis; thiamine diphosphate biosynthesis. Functionally, catalyzes the rearrangement of 1-deoxy-D-xylulose 5-phosphate (DXP) to produce the thiazole phosphate moiety of thiamine. Sulfur is provided by the thiocarboxylate moiety of the carrier protein ThiS. In vitro, sulfur can be provided by H(2)S. The sequence is that of Thiazole synthase from Neisseria meningitidis serogroup A / serotype 4A (strain DSM 15465 / Z2491).